The sequence spans 37 residues: Large ribosomal subunit protein bL36 (37 aa).

This sequence belongs to the bacterial ribosomal protein bL36 family.

In Heliobacterium modesticaldum (strain ATCC 51547 / Ice1), this protein is Large ribosomal subunit protein bL36.